The sequence spans 284 residues: D-tagatose-1,6-bisphosphate aldolase subunit GatY (284 aa).

The active-site Proton donor is Asp-82. 2 residues coordinate Zn(2+): His-83 and His-180. Dihydroxyacetone phosphate is bound at residue Gly-181. Residue His-208 coordinates Zn(2+). Dihydroxyacetone phosphate is bound by residues 209-211 (GAS) and 230-233 (NVAT).

This sequence belongs to the class II fructose-bisphosphate aldolase family. TagBP aldolase GatY subfamily. Forms a complex with GatZ. Zn(2+) is required as a cofactor.

It catalyses the reaction D-tagatofuranose 1,6-bisphosphate = D-glyceraldehyde 3-phosphate + dihydroxyacetone phosphate. It participates in carbohydrate metabolism; D-tagatose 6-phosphate degradation; D-glyceraldehyde 3-phosphate and glycerone phosphate from D-tagatose 6-phosphate: step 2/2. Catalytic subunit of the tagatose-1,6-bisphosphate aldolase GatYZ, which catalyzes the reversible aldol condensation of dihydroxyacetone phosphate (DHAP or glycerone-phosphate) with glyceraldehyde 3-phosphate (G3P) to produce tagatose 1,6-bisphosphate (TBP). Requires GatZ subunit for full activity and stability. Is involved in the catabolism of galactitol. This chain is D-tagatose-1,6-bisphosphate aldolase subunit GatY, found in Escherichia coli O17:K52:H18 (strain UMN026 / ExPEC).